Consider the following 198-residue polypeptide: Pyridoxal 5'-phosphate synthase subunit PdxT (198 aa).

L-glutamine is bound at residue Gly49 to Ser51. The active-site Nucleophile is Cys81. Residues Arg113 and Ile141–Arg142 each bind L-glutamine. Active-site charge relay system residues include His177 and Glu179.

The protein belongs to the glutaminase PdxT/SNO family. As to quaternary structure, in the presence of PdxS, forms a dodecamer of heterodimers. Only shows activity in the heterodimer.

It catalyses the reaction aldehydo-D-ribose 5-phosphate + D-glyceraldehyde 3-phosphate + L-glutamine = pyridoxal 5'-phosphate + L-glutamate + phosphate + 3 H2O + H(+). The enzyme catalyses L-glutamine + H2O = L-glutamate + NH4(+). It participates in cofactor biosynthesis; pyridoxal 5'-phosphate biosynthesis. Functionally, catalyzes the hydrolysis of glutamine to glutamate and ammonia as part of the biosynthesis of pyridoxal 5'-phosphate. The resulting ammonia molecule is channeled to the active site of PdxS. This is Pyridoxal 5'-phosphate synthase subunit PdxT from Mycobacterium ulcerans (strain Agy99).